The sequence spans 157 residues: 3-dehydroquinate dehydratase (157 aa).

Y24 functions as the Proton acceptor in the catalytic mechanism. Residues N75, H81, and D88 each coordinate substrate. The active-site Proton donor is the H101. Substrate contacts are provided by residues 102–103 (LS) and R112.

This sequence belongs to the type-II 3-dehydroquinase family. In terms of assembly, homododecamer.

It carries out the reaction 3-dehydroquinate = 3-dehydroshikimate + H2O. It participates in metabolic intermediate biosynthesis; chorismate biosynthesis; chorismate from D-erythrose 4-phosphate and phosphoenolpyruvate: step 3/7. Functionally, catalyzes a trans-dehydration via an enolate intermediate. This is 3-dehydroquinate dehydratase from Brucella abortus (strain S19).